We begin with the raw amino-acid sequence, 830 residues long: Pentatricopeptide repeat-containing protein At5g55740, chloroplastic (830 aa).

Residues 1–59 (MASLPFNTIPNKVPFSVSSKPSSKHHDEQAHSPSSTSYFHRVSSLCKNGEIKEALSLVT) constitute a chloroplast transit peptide. Residues 15–36 (FSVSSKPSSKHHDEQAHSPSST) form a disordered region. PPR repeat units follow at residues 69-103 (GPEIYGEILQGCVYERDLSTGKQIHARILKNGDFY), 106-136 (NEYIETKLVIFYAKCDALEIAEVLFSKLRVR), 137-171 (NVFSWAAIIGVKCRIGLCEGALMGFVEMLENEIFP), 172-206 (DNFVVPNVCKACGALKWSRFGRGVHGYVVKSGLED), 207-237 (CVFVASSLADMYGKCGVLDDASKVFDEIPDR), 238-272 (NAVAWNALMVGYVQNGKNEEAIRLFSDMRKQGVEP), 273-307 (TRVTVSTCLSASANMGGVEEGKQSHAIAIVNGMEL), 308-338 (DNILGTSLLNFYCKVGLIEYAEMVFDRMFEK), 339-373 (DVVTWNLIISGYVQQGLVEDAIYMCQLMRLEKLKY), 374-408 (DCVTLATLMSAAARTENLKLGKEVQCYCIRHSFES), 409-439 (DIVLASTVMDMYAKCGSIVDAKKVFDSTVEK), 440-474 (DLILWNTLLAAYAESGLSGEALRLFYGMQLEGVPP), 475-509 (NVITWNLIILSLLRNGQVDEAKDMFLQMQSSGIIP), 510-544 (NLISWTTMMNGMVQNGCSEEAILFLRKMQESGLRP), 545-575 (NAFSITVALSACAHLASLHIGRTIHGYIIRN), 581-611 (LVSIETSLVDMYAKCGDINKAEKVFGSKLYS), 612-646 (ELPLSNAMISAYALYGNLKEAIALYRSLEGVGLKP), 647-682 (DNITITNVLSACNHAGDINQAIEIFTDIVSKRSMKP), and 683-713 (CLEHYGLMVDLLASAGETEKALRLIEEMPFK). A type E motif region spans residues 718–793 (MIQSLVASCN…KPGCSWIQIT (76 aa)). The segment at 796 to 826 (EGVHVFVANDKTHTRINEIQMMLALLLYDMG) is type E(+) motif.

Belongs to the PPR family. PCMP-E subfamily.

It localises to the plastid. The protein localises to the chloroplast. Plays a major role in chloroplast RNA editing. Acts as a site-recognition transacting factor involved in the edition of the site 2 of ndhD (ndhD-2), which encodes a subunit of the NDH complex. The polypeptide is Pentatricopeptide repeat-containing protein At5g55740, chloroplastic (CRR21) (Arabidopsis thaliana (Mouse-ear cress)).